Reading from the N-terminus, the 578-residue chain is Zinc finger-containing ubiquitin peptidase 1 (578 aa).

The C2H2-type 1 zinc finger occupies 2 to 24; that stretch reads LSCDICGETVTSEPDMKAHLIVH. The C2H2-type 2; atypical zinc finger occupies 29–52; the sequence is IVCPFCKLSGVSYDEMCFHIETAH. C2H2-type zinc fingers lie at residues 154–177 and 193–215; these read PECP…KTTH and YDCP…VDLH. An MIU region spans residues 226 to 248; the sequence is DRVQCSGDLQLAHQLQQEEDRKR. The zUBD/ZHA stretch occupies residues 249 to 274; that stretch reads RSEESRQEIEEFQKLQRQYGLDNSGG. Lys-262 is subject to N6-acetyllysine. Cys-360 serves as the catalytic Nucleophile. His-491 functions as the Proton acceptor in the catalytic mechanism. Residue Asp-512 is part of the active site.

It belongs to the peptidase C78 family. ZUFSP subfamily. As to quaternary structure, interacts with RPA1 and RPA2.

It is found in the cytoplasm. Its subcellular location is the nucleus. It carries out the reaction Thiol-dependent hydrolysis of ester, thioester, amide, peptide and isopeptide bonds formed by the C-terminal Gly of ubiquitin (a 76-residue protein attached to proteins as an intracellular targeting signal).. Its function is as follows. Deubiquitinase with endodeubiquitinase activity that specifically interacts with and cleaves 'Lys-63'-linked long polyubiquitin chains. Shows only weak activity against 'Lys-11' and 'Lys-48'-linked chains. Plays an important role in genome stability pathways, functioning to prevent spontaneous DNA damage and also promote cellular survival in response to exogenous DNA damage. Modulates the ubiquitination status of replication protein A (RPA) complex proteins in response to replication stress. The polypeptide is Zinc finger-containing ubiquitin peptidase 1 (Macaca fascicularis (Crab-eating macaque)).